A 22-amino-acid polypeptide reads, in one-letter code: Piscidin-3 (22 aa).

A Glycine amide modification is found at glycine 22.

Belongs to the pleurocidin family. As to expression, mast cells in gill, skin and gut, and in lining blood vessels in the viscera.

It localises to the secreted. The protein resides in the membrane. Functionally, antimicrobial peptide with broad-spectrum activity against Gram-positive and Gram-negative bacteria. Rapidly inactivates both channel catfish herpesvirus (ED(50)=11 uM) and frog virus 3 (ED(50)=16 uM) over a wide temperature range. Has hemolytic activity. This Morone chrysops x Morone saxatilis (White bass x Striped bass) protein is Piscidin-3.